Here is a 164-residue protein sequence, read N- to C-terminus: Phosphatidyl-N-methylethanolamine N-methyltransferase (164 aa).

The segment at residues 1 to 21 (MGLLAAIGVLLPFPFYWWLWT) is an intramembrane region (helical). The Lumenal segment spans residues 22–30 (NAQSWVNLC). Residues 31–52 (GRERDPSTVMARVSHVLKAAQL) form a helical membrane-spanning segment. Topologically, residues 53–69 (LSLFSVASLSWPPPLYF) are cytoplasmic. A helical membrane pass occupies residues 70–90 (WPLMAFGQFLNFRVYQLLGEA). 74–76 (AFG) contacts S-adenosyl-L-methionine. At 91 to 131 (GTYYGVRFGKNIPWVTEFPFGVIRDPQYVGSIMSLLACLSW) the chain is on the lumenal side. The chain crosses the membrane as a helical span at residues 132-151 (VPFQYILLWSLGYVFMMFLE). At 152–164 (SKEDPNARAKSIS) the chain is on the cytoplasmic side. 154–155 (ED) contributes to the S-adenosyl-L-methionine binding site.

The protein belongs to the class VI-like SAM-binding methyltransferase superfamily. PEMT/PEM2 methyltransferase family.

It is found in the endoplasmic reticulum membrane. The catalysed reaction is a 1,2-diacyl-sn-glycero-3-phospho-N-methylethanolamine + S-adenosyl-L-methionine = a 1,2-diacyl-sn-glycero-3-phospho-N,N-dimethylethanolamine + S-adenosyl-L-homocysteine + H(+). The enzyme catalyses a 1,2-diacyl-sn-glycero-3-phospho-N,N-dimethylethanolamine + S-adenosyl-L-methionine = a 1,2-diacyl-sn-glycero-3-phosphocholine + S-adenosyl-L-homocysteine + H(+). It participates in phospholipid metabolism; phosphatidylcholine biosynthesis. Functionally, catalyzes the second two steps of the methylation pathway of phosphatidylcholine biosynthesis, the SAM-dependent methylation of phosphatidylmonomethylethanolamine (PMME) to phosphatidyldimethylethanolamine (PDME) and of PDME to phosphatidylcholine (PC). The chain is Phosphatidyl-N-methylethanolamine N-methyltransferase (PLMT) from Arabidopsis thaliana (Mouse-ear cress).